Here is an 86-residue protein sequence, read N- to C-terminus: Insulin (86 aa).

Disulfide bonds link Cys7–Cys72, Cys19–Cys85, and Cys71–Cys76. A propeptide spans 33–63 (c peptide); the sequence is EAEDPQVGEVELGGGPGLGGLQPLALAGPQQ.

Belongs to the insulin family. Heterodimer of a B chain and an A chain linked by two disulfide bonds.

The protein resides in the secreted. Insulin decreases blood glucose concentration. It increases cell permeability to monosaccharides, amino acids and fatty acids. It accelerates glycolysis, the pentose phosphate cycle, and glycogen synthesis in liver. The chain is Insulin (INS) from Equus caballus (Horse).